We begin with the raw amino-acid sequence, 392 residues long: Chaperone protein DnaJ (392 aa).

Residues 2–67 enclose the J domain; the sequence is DYYDVLGVSK…QKRESYDRYG (66 aa). The CR-type zinc finger occupies 149–227; sequence GVEKELLVSG…CRGQGRIKDK (79 aa). Positions 162, 165, 179, 182, 201, 204, 215, and 218 each coordinate Zn(2+). 4 CXXCXGXG motif repeats span residues 162–169, 179–186, 201–208, and 215–222; these read CETCLGSG, CDRCKGSG, CPECGGEG, and CSNCRGQG.

This sequence belongs to the DnaJ family. In terms of assembly, homodimer. Zn(2+) is required as a cofactor.

It is found in the cytoplasm. In terms of biological role, participates actively in the response to hyperosmotic and heat shock by preventing the aggregation of stress-denatured proteins and by disaggregating proteins, also in an autonomous, DnaK-independent fashion. Unfolded proteins bind initially to DnaJ; upon interaction with the DnaJ-bound protein, DnaK hydrolyzes its bound ATP, resulting in the formation of a stable complex. GrpE releases ADP from DnaK; ATP binding to DnaK triggers the release of the substrate protein, thus completing the reaction cycle. Several rounds of ATP-dependent interactions between DnaJ, DnaK and GrpE are required for fully efficient folding. Also involved, together with DnaK and GrpE, in the DNA replication of plasmids through activation of initiation proteins. The chain is Chaperone protein DnaJ from Chlamydia caviae (strain ATCC VR-813 / DSM 19441 / 03DC25 / GPIC) (Chlamydophila caviae).